The following is a 303-amino-acid chain: Cysteine synthase B (303 aa).

The residue at position 41 (Lys41) is an N6-(pyridoxal phosphate)lysine. Pyridoxal 5'-phosphate is bound by residues Asn71, 174–178 (GTTGT), and Ser255.

It belongs to the cysteine synthase/cystathionine beta-synthase family. The cofactor is pyridoxal 5'-phosphate.

It catalyses the reaction O-acetyl-L-serine + hydrogen sulfide = L-cysteine + acetate. Its pathway is amino-acid biosynthesis; L-cysteine biosynthesis; L-cysteine from L-serine: step 2/2. In terms of biological role, two cysteine synthase enzymes are found. Both catalyze the same reaction. Cysteine synthase B can also use thiosulfate in place of sulfide to give cysteine thiosulfonate as a product. In Salmonella typhimurium (strain LT2 / SGSC1412 / ATCC 700720), this protein is Cysteine synthase B (cysM).